A 143-amino-acid polypeptide reads, in one-letter code: Small ribosomal subunit protein uS12 (143 aa).

Basic residues predominate over residues 1–20; sequence MGKPRGLRTARKHRSHRRDQ. The disordered stretch occupies residues 1–26; the sequence is MGKPRGLRTARKHRSHRRDQRWHDKD. P62 is subject to Hydroxyproline.

The protein belongs to the universal ribosomal protein uS12 family. As to quaternary structure, component of the 40S small ribosomal subunit.

Its subcellular location is the cytoplasm. The protein resides in the cytosol. It localises to the rough endoplasmic reticulum. The protein is Small ribosomal subunit protein uS12 (RpS23) of Dermacentor variabilis (American dog tick).